We begin with the raw amino-acid sequence, 1211 residues long: MSKKSLGLDVRLELEGLISNDDTIRSEKDGRQASIFRVAELDARTEADNLRSIIHQSAREGNVNALQEALLKAPLAVNAQDGDFMTPLHYAARYGNYDAVKLLLSKNALPNTKNREGDTPLHIASKYIYGYSDICSIIDEDQADSARKYNTATKKIINALVSENAEIDPVNKYQLTPLHYAAMKSNFSALHALIKLKADVDAEDDNKMTPLLLACVHGSQEIIQELIKANSNVTKRDQRLNTVFHIVALRGEPEYLEMMMDHDPVEAIKALNLFNNEKKTPLRMAVEGNHPETLKKILQMEKKNSCKWMDREKELIHFAAEKGFLEVLKALVEAGGNKNELNEVKAVPLHVAAQMNQLEVVSYLIEEEKDNIDVVDEQGLTPLMMAVTHDSKKCVEYLIAKKANLTITDKDERTPVFIGAKFNALSSVEYILDHLRKKNKETERSALKSPTRNTLRIVSEDVRRTMVNMVDRDQNTPMHIVASNGYLEMMQLLQKHGASITQVNEDEETALHRAAIGGQTGAVRQLLEWDIRLLLMKDEMGNSALHLAARSGHDATTKVLLDNGADKEAKNSYQKTPLQVAVDSGKLETCQRLVAKGAQIESSSDTKTVLHTAAFYGNESIVRYFIAEGVTIDRRDEEGKTAFDIACENDHKDVARAFLETDQWKNLMIPCDVIPLDKHRNPVNMKRRTPFRTLLTKFPELASFVMDNCIEKSKEETDSTQSVAYNFEFLDDTYMMRCVSDDGTGEQLIGCKSAYDEDFKLEKDAQSYASNYDRVYKYHPLKLMADAEKLHLLNHPLSKALLKYKWNRLGRPMYYFALFMYLVFIVSLTQYVRHTKAPYNVWNEESYYDSEYFDENETCPQINTTKPDVVWKIIIQTLAVCQILVECFQLFQRKFAYLVNWENWIDCFIYSTALITVYDFSECSATSGVRQNWQWILAALCIFFGWINLLFMIRKMPRFGIFVVMFVDIVKTFFRFFPVFVLFIIAFSSSFYVILQNRPEFSTIFMSPLKTTVMMIGEFEFTGIFHGDETTHAEKMFGPAHTAVACALFFFFCIIMTILLMNLLVGLAVDDIKGVQEKAELKRLAMQVDLVLQIEASLHFFIQRTKKYATCRYATFPYGKLHKTGFAGWWSNFRRRFGLSVSTDPEIDEMYEREAEFTSEMTQKLQNQAAKLKNIQENIDVMYEKQVRLEAIIAKLATGLNINIELEEKDN.

The Cytoplasmic segment spans residues 1–811 (MSKKSLGLDV…LKYKWNRLGR (811 aa)). ANK repeat units follow at residues 49–79 (NLRS…AVNA), 83–112 (DFMT…LPNT), 116–169 (EGDT…EIDP), 173–202 (YQLT…DVDA), 206–235 (NKMT…NVTK), 239–270 (RLNT…AIKA), 277–306 (EKKT…KNSC), 311–340 (REKE…NKNE), 344–374 (VKAV…NIDV), 378–407 (QGLT…NLTI), 411–440 (DERT…KKNK), 473–502 (DQNT…SITQ), 506–535 (DEET…RLLL), 540–569 (MGNS…DKEA), 573–602 (YQKT…QIES), 605–634 (DTKT…TIDR), and 638–669 (EGKT…NLMI). A helical membrane pass occupies residues 812-832 (PMYYFALFMYLVFIVSLTQYV). The Extracellular segment spans residues 833 to 870 (RHTKAPYNVWNEESYYDSEYFDENETCPQINTTKPDVV). 2 N-linked (GlcNAc...) asparagine glycosylation sites follow: Asn856 and Asn863. A helical transmembrane segment spans residues 871–891 (WKIIIQTLAVCQILVECFQLF). Topologically, residues 892 to 894 (QRK) are cytoplasmic. The helical transmembrane segment at 895–915 (FAYLVNWENWIDCFIYSTALI) threads the bilayer. At 916–932 (TVYDFSECSATSGVRQN) the chain is on the extracellular side. A helical transmembrane segment spans residues 933–953 (WQWILAALCIFFGWINLLFMI). Residues 954–975 (RKMPRFGIFVVMFVDIVKTFFR) lie on the Cytoplasmic side of the membrane. The helical transmembrane segment at 976 to 996 (FFPVFVLFIIAFSSSFYVILQ) threads the bilayer. The Extracellular segment spans residues 997-1004 (NRPEFSTI). Residues 1005-1025 (FMSPLKTTVMMIGEFEFTGIF) constitute an intramembrane region (pore-forming). At 1026–1048 (HGDETTHAEKMFGPAHTAVACAL) the chain is on the extracellular side. A helical membrane pass occupies residues 1049–1069 (FFFFCIIMTILLMNLLVGLAV). The Cytoplasmic portion of the chain corresponds to 1070-1193 (DDIKGVQEKA…EKQVRLEAII (124 aa)). Positions 1149 to 1191 (EMYEREAEFTSEMTQKLQNQAAKLKNIQENIDVMYEKQVRLEA) form a coiled coil.

This sequence belongs to the transient receptor (TC 1.A.4) family. In terms of assembly, homotetramer. Expressed in many sensory neurons, including OLQ and IL1 neurons.

Its subcellular location is the cell membrane. Receptor-activated non-selective cation channel involved in the nose-touch response and foraging behavior. Contributes to the neural responses of sensory neurons to touch, particularly after repeated mechanical stimulation. Has no apparent role in thermosensory or chemosensory behaviors. This chain is Transient receptor potential cation channel subfamily A member 1 homolog (trpa-1), found in Caenorhabditis elegans.